The sequence spans 64 residues: Kappa-lycotoxin-Os1a (64 aa).

4 cysteine pairs are disulfide-bonded: cysteine 10/cysteine 26, cysteine 17/cysteine 56, cysteine 19/cysteine 42, and cysteine 28/cysteine 40.

The protein belongs to the neurotoxin 04 (omega-agtx) family. 01 (type I omega-agtx) subfamily. In terms of tissue distribution, expressed by the venom gland.

It is found in the secreted. Its function is as follows. Insecticidal to house crickets. It induces an excitatory slow-onset impact that leads to irreversible spastic paralysis. It also modifies human voltage-gated potassium channel Kv1.5/KCNA5. Most likely, it binds to the voltage-sensing domain of the channel, suggesting it does not block the pore but prevents its opening at physiological membrane potentials. The recombinant peptide binds to the channel in an irreversible manner and slows down the hKv1.5 current activation kinetics. It is not toxic to mice, when intracranially injected (at 0.5 ug/g mouse). In Oculicosa supermirabilis (Central Asian wolf-spider), this protein is Kappa-lycotoxin-Os1a.